Reading from the N-terminus, the 146-residue chain is Large ribosomal subunit protein uL16 (146 aa).

Belongs to the universal ribosomal protein uL16 family. Part of the 50S ribosomal subunit.

Binds 23S rRNA and is also seen to make contacts with the A and possibly P site tRNAs. This is Large ribosomal subunit protein uL16 from Lactobacillus helveticus (strain DPC 4571).